Consider the following 327-residue polypeptide: MTDEIDKAPHIPVLLGAILREVAPVSGVWLDGTFGAGGYARGLLEGGADTVIGVDRDPLAFEMAADWAGSYGDALRLKEGTFSNLDTLADEPLDGVALDLGVSSMQLDLAERGFSFMRDGPLDMRMGQIGVSAEDLVNDAPEKLLADILFQYGEERAARRIAKAIVAERLKCRINSTLQLAGIVEKCLPSKKPGQSHPATRSFQAIRIAVNDEFGQLAQGLMAAERALRPGGKLAVVTFHSSEDRIVKKFMSERSSTGGGGSRYAPEAAAKVPGFTLTPRKAIPPDADEIARNTRARSAKLRIATRTDAPAQPVAPETLGLPQLEGF.

S-adenosyl-L-methionine contacts are provided by residues 37–39 (GGY), D55, F82, D99, and Q106. The disordered stretch occupies residues 303–327 (IATRTDAPAQPVAPETLGLPQLEGF).

It belongs to the methyltransferase superfamily. RsmH family.

The protein localises to the cytoplasm. It catalyses the reaction cytidine(1402) in 16S rRNA + S-adenosyl-L-methionine = N(4)-methylcytidine(1402) in 16S rRNA + S-adenosyl-L-homocysteine + H(+). Specifically methylates the N4 position of cytidine in position 1402 (C1402) of 16S rRNA. This chain is Ribosomal RNA small subunit methyltransferase H, found in Jannaschia sp. (strain CCS1).